We begin with the raw amino-acid sequence, 212 residues long: Ribosomal RNA small subunit methyltransferase G (212 aa).

S-adenosyl-L-methionine-binding positions include glycine 80, leucine 85, 131–132, and arginine 146; that span reads AE.

This sequence belongs to the methyltransferase superfamily. RNA methyltransferase RsmG family.

The protein localises to the cytoplasm. The enzyme catalyses guanosine(527) in 16S rRNA + S-adenosyl-L-methionine = N(7)-methylguanosine(527) in 16S rRNA + S-adenosyl-L-homocysteine. Functionally, specifically methylates the N7 position of guanine in position 527 of 16S rRNA. This chain is Ribosomal RNA small subunit methyltransferase G, found in Xylella fastidiosa (strain 9a5c).